A 181-amino-acid polypeptide reads, in one-letter code: Shikimate kinase 2 (181 aa).

12 to 17 (GCGKTT) lines the ATP pocket. Residues Thr16 and Asp32 each coordinate Mg(2+). Residues Asp34, Arg58, and Gly79 each coordinate substrate. The segment at 112–126 (EAEPEAELRPTLTGK) is LID domain. Arg120 serves as a coordination point for ATP. Arg139 lines the substrate pocket.

This sequence belongs to the shikimate kinase family. AroL subfamily. In terms of assembly, monomer. It depends on Mg(2+) as a cofactor.

It localises to the cytoplasm. It carries out the reaction shikimate + ATP = 3-phosphoshikimate + ADP + H(+). The protein operates within metabolic intermediate biosynthesis; chorismate biosynthesis; chorismate from D-erythrose 4-phosphate and phosphoenolpyruvate: step 5/7. Catalyzes the specific phosphorylation of the 3-hydroxyl group of shikimic acid using ATP as a cosubstrate. The polypeptide is Shikimate kinase 2 (Salmonella schwarzengrund (strain CVM19633)).